The following is a 157-amino-acid chain: 6,7-dimethyl-8-ribityllumazine synthase 2 (157 aa).

5-amino-6-(D-ribitylamino)uracil contacts are provided by residues tryptophan 21, 55-57, and 79-81; these read AYE and FVV. The active-site Proton donor is the arginine 87. 5-amino-6-(D-ribitylamino)uracil is bound at residue serine 112. Histidine 126 lines the (2S)-2-hydroxy-3-oxobutyl phosphate pocket.

It belongs to the DMRL synthase family. Homodecamer, arranged as a dimer of pentamers.

It carries out the reaction (2S)-2-hydroxy-3-oxobutyl phosphate + 5-amino-6-(D-ribitylamino)uracil = 6,7-dimethyl-8-(1-D-ribityl)lumazine + phosphate + 2 H2O + H(+). The protein operates within cofactor biosynthesis; riboflavin biosynthesis; riboflavin from 2-hydroxy-3-oxobutyl phosphate and 5-amino-6-(D-ribitylamino)uracil: step 1/2. Catalyzes the formation of 6,7-dimethyl-8-ribityllumazine by condensation of 5-amino-6-(D-ribitylamino)uracil with 3,4-dihydroxy-2-butanone 4-phosphate. This is the penultimate step in the biosynthesis of riboflavin. In Mesorhizobium japonicum (strain LMG 29417 / CECT 9101 / MAFF 303099) (Mesorhizobium loti (strain MAFF 303099)), this protein is 6,7-dimethyl-8-ribityllumazine synthase 2 (ribH2).